Here is a 679-residue protein sequence, read N- to C-terminus: Glycine--tRNA ligase beta subunit (679 aa).

It belongs to the class-II aminoacyl-tRNA synthetase family. Tetramer of two alpha and two beta subunits.

The protein resides in the cytoplasm. It carries out the reaction tRNA(Gly) + glycine + ATP = glycyl-tRNA(Gly) + AMP + diphosphate. This is Glycine--tRNA ligase beta subunit from Streptococcus pyogenes serotype M49 (strain NZ131).